Reading from the N-terminus, the 89-residue chain is Small ribosomal subunit protein uS15 (89 aa).

Residues 1–21 (MSVDAETKTKIIKDNARDKND) show a composition bias toward basic and acidic residues. A disordered region spans residues 1–26 (MSVDAETKTKIIKDNARDKNDTGSPE).

The protein belongs to the universal ribosomal protein uS15 family. Part of the 30S ribosomal subunit. Forms a bridge to the 50S subunit in the 70S ribosome, contacting the 23S rRNA.

In terms of biological role, one of the primary rRNA binding proteins, it binds directly to 16S rRNA where it helps nucleate assembly of the platform of the 30S subunit by binding and bridging several RNA helices of the 16S rRNA. Forms an intersubunit bridge (bridge B4) with the 23S rRNA of the 50S subunit in the ribosome. The sequence is that of Small ribosomal subunit protein uS15 from Erythrobacter litoralis (strain HTCC2594).